The sequence spans 628 residues: DEAD-box ATP-dependent RNA helicase 9 (628 aa).

A Q motif motif is present at residues 98-126 (LEVAKLGISPKIVSQLASRGITKLFPIQR). Residues 129–302 (LEPAMQGKDM…QKYLKNPVTI (174 aa)) enclose the Helicase ATP-binding domain. 142–149 (AKTGTGKT) contacts ATP. The DEAD box signature appears at 250-253 (DEAD). The 148-residue stretch at 331–478 (VLGELIKEHA…KINVEGSDLM (148 aa)) folds into the Helicase C-terminal domain. Disordered stretches follow at residues 496 to 548 (GSYG…SGFG) and 571 to 628 (SGFG…FGSS). Residues 500-509 (RRGSFGSSSS) show a composition bias toward low complexity. The span at 510 to 548 (RGGGFGDSGFGRSGGGFGRSGGGGFGRSSGGGFGDSGFG) shows a compositional bias: gly residues.

It belongs to the DEAD box helicase family. DDX21/DDX50 subfamily.

It catalyses the reaction ATP + H2O = ADP + phosphate + H(+). In Oryza sativa subsp. japonica (Rice), this protein is DEAD-box ATP-dependent RNA helicase 9.